The primary structure comprises 418 residues: MFSKHDQLQGYDDELLAAMDAEDRRQEDHIELIASENYASKRVMQAQGGGLTNKYAEGYPGKRYYGGCEHVDKVERLAIDRARQLFGADYANVQPHSGSSANAAVYLALLNAGDTILGMSLAHGGHLTHGAKVSSSGKLYNAVQYGLDTATGLIDYDEVERLAVEHKPKMIVAGFSAYSKTLDFPRFRAIADKVGALLFVDMAHVAGLVAAGLYPNPIPFADVVTTTTHKTLRGPRGGLILARANEEIEKKLNSAVFPGAQGGPLMHVIAAKAVCFKEALEPGFKDYQAQVIRNAKAMAEVFIGRGYDVVSGGTDNHLMLISLVKQGLTGKAADAALGAAHITVNKNAVPNDPQSPFVTSGIRIGTPAVTTRGFREGECRELAGWICDILDDIDNPEVGERVRGQVGEFCRHFPVYAD.

Residues leucine 121 and 125–127 (GHL) each bind (6S)-5,6,7,8-tetrahydrofolate. Position 230 is an N6-(pyridoxal phosphate)lysine (lysine 230). 355-357 (SPF) is a (6S)-5,6,7,8-tetrahydrofolate binding site.

This sequence belongs to the SHMT family. Homodimer. Requires pyridoxal 5'-phosphate as cofactor.

It localises to the cytoplasm. It catalyses the reaction (6R)-5,10-methylene-5,6,7,8-tetrahydrofolate + glycine + H2O = (6S)-5,6,7,8-tetrahydrofolate + L-serine. The protein operates within one-carbon metabolism; tetrahydrofolate interconversion. It participates in amino-acid biosynthesis; glycine biosynthesis; glycine from L-serine: step 1/1. Catalyzes the reversible interconversion of serine and glycine with tetrahydrofolate (THF) serving as the one-carbon carrier. This reaction serves as the major source of one-carbon groups required for the biosynthesis of purines, thymidylate, methionine, and other important biomolecules. Also exhibits THF-independent aldolase activity toward beta-hydroxyamino acids, producing glycine and aldehydes, via a retro-aldol mechanism. The chain is Serine hydroxymethyltransferase 2 from Pseudomonas aeruginosa (strain ATCC 15692 / DSM 22644 / CIP 104116 / JCM 14847 / LMG 12228 / 1C / PRS 101 / PAO1).